The sequence spans 494 residues: MKTIAFDSNKYLNLQRDHILERISQFDGKLYMEFGGKMLEDYHAARVLPGYEPDNKIKLLKELKEQVEIVIAINANNIEHSKARGDLGISYDQEVFRLIDKFNTLDIYVGSVVITQYNNQPAADAFRKQLKKNGIASYLHYPIKSYPTDINHIISSEGMGKNDYIKTSRNLIVVTAPGPGSGKLATCISQMYHDQINGVKSGYAKFETFPVWNLPLHHPVNLAYEAATADLDDVNMIDPFHLETYGKTAVNYNRDIEVFPVLNRTFERILSKSPYASPTDMGVNMVGFSIVNEEAAIEASKQEIIRRYYQTLVDFKAERVTESAVKKIELLMNDIGVTPDDRHVTVAAHQKAEQTGQPALALQLPNGQIVTGKTSELFGPTAAVIINAIKTLAKIDKTTHLIEPEYVKPIQGLKVNHLGSHNPRLHSNEILIALAITAMTSEEANLAMKELGNLKGSEAHSTVILTEEDKNVLRKLGVNITFDPVYQHHKLYRK.

The protein belongs to the UPF0371 family.

This Streptococcus pyogenes serotype M28 (strain MGAS6180) protein is UPF0371 protein M28_Spy1076.